We begin with the raw amino-acid sequence, 434 residues long: Glutamate-1-semialdehyde 2,1-aminomutase 1 (434 aa).

Lys-270 carries the post-translational modification N6-(pyridoxal phosphate)lysine.

It belongs to the class-III pyridoxal-phosphate-dependent aminotransferase family. HemL subfamily. Homodimer. Pyridoxal 5'-phosphate is required as a cofactor.

The protein resides in the cytoplasm. It catalyses the reaction (S)-4-amino-5-oxopentanoate = 5-aminolevulinate. Its pathway is porphyrin-containing compound metabolism; protoporphyrin-IX biosynthesis; 5-aminolevulinate from L-glutamyl-tRNA(Glu): step 2/2. This chain is Glutamate-1-semialdehyde 2,1-aminomutase 1, found in Bacillus thuringiensis subsp. konkukian (strain 97-27).